The sequence spans 310 residues: Biotin synthase (310 aa).

Residues Gly34–Arg262 enclose the Radical SAM core domain. Residues Cys49, Cys53, and Cys56 each contribute to the [4Fe-4S] cluster site. [2Fe-2S] cluster contacts are provided by Cys93, Cys125, Cys185, and Arg257.

Belongs to the radical SAM superfamily. Biotin synthase family. As to quaternary structure, homodimer. [4Fe-4S] cluster is required as a cofactor. The cofactor is [2Fe-2S] cluster.

It carries out the reaction (4R,5S)-dethiobiotin + (sulfur carrier)-SH + 2 reduced [2Fe-2S]-[ferredoxin] + 2 S-adenosyl-L-methionine = (sulfur carrier)-H + biotin + 2 5'-deoxyadenosine + 2 L-methionine + 2 oxidized [2Fe-2S]-[ferredoxin]. Its pathway is cofactor biosynthesis; biotin biosynthesis; biotin from 7,8-diaminononanoate: step 2/2. Its function is as follows. Catalyzes the conversion of dethiobiotin (DTB) to biotin by the insertion of a sulfur atom into dethiobiotin via a radical-based mechanism. The chain is Biotin synthase from Synechococcus sp. (strain JA-3-3Ab) (Cyanobacteria bacterium Yellowstone A-Prime).